Consider the following 603-residue polypeptide: DNA mismatch repair protein MutL (603 aa).

The protein belongs to the DNA mismatch repair MutL/HexB family.

Its function is as follows. This protein is involved in the repair of mismatches in DNA. It is required for dam-dependent methyl-directed DNA mismatch repair. May act as a 'molecular matchmaker', a protein that promotes the formation of a stable complex between two or more DNA-binding proteins in an ATP-dependent manner without itself being part of a final effector complex. The protein is DNA mismatch repair protein MutL of Rhodopseudomonas palustris (strain BisA53).